The sequence spans 265 residues: Aquaporin-5 (265 aa).

Topologically, residues 1-12 (MKKEVCSVAFFK) are cytoplasmic. The chain crosses the membrane as a helical span at residues 13 to 33 (AVFAEFLATLIFVFFGLGSAL). Residues 34–39 (KWPSAL) lie on the Extracellular side of the membrane. The helical transmembrane segment at 40 to 60 (PTILQISIAFGLAIGTLAQAL) threads the bilayer. Over 61–65 (GPVSG) the chain is Cytoplasmic. An intramembrane region (discontinuously helical) is located at residues 66 to 74 (GHINPAITL). An NPA 1 motif is present at residues 69 to 71 (NPA). Residues 75–87 (ALLIGNQISLLRA) are Cytoplasmic-facing. A helical transmembrane segment spans residues 88-108 (IFYVAAQLVGAIAGAGILYWL). Residues 109 to 126 (APGNARGNLAVNALSNNT) are Extracellular-facing. The N-linked (GlcNAc...) asparagine glycan is linked to asparagine 124. A helical membrane pass occupies residues 127 to 147 (TPGKAVVVELILTFQLALCIF). The Cytoplasmic portion of the chain corresponds to 148-158 (SSTDSRRTSPV). The chain crosses the membrane as a helical span at residues 159–179 (GSPALSIGLSVTLGHLVGIYF). Threonine 180 is a topological domain (extracellular). Residues 181-191 (GCSMNPARSFG) constitute an intramembrane region (discontinuously helical). The NPA 2 motif lies at 185-187 (NPA). Topologically, residues 192–203 (PAVVMNRFSPSH) are extracellular. Residues 204 to 224 (WVFWVGPIVGAVLAAILYFYL) form a helical membrane-spanning segment. The Cytoplasmic portion of the chain corresponds to 225–265 (LFPSSLSLHDRVAVVKGTYEPEEDWEDHREERKKTIELTAH).

The protein belongs to the MIP/aquaporin (TC 1.A.8) family. In terms of assembly, homotetramer; each monomer provides an independent water pore. Interacts with TRPV4; the interaction is probably indirect and regulates TRPV4 activation by hypotonicity. Detected at the luminal membrane of secretory epithelial cells in hindpaw sweat glands. Detected in acinar cells in salivary glands, in duct cells in lacrimal glands and in lung (at protein level). Detected in lung, parotid, submandibular, sublingual, and lacrimal gland tissues.

It is found in the apical cell membrane. Its subcellular location is the cell membrane. The protein resides in the cytoplasmic vesicle membrane. It carries out the reaction H2O(in) = H2O(out). Functionally, aquaporins form homotetrameric transmembrane channels, with each monomer independently mediating water transport across the plasma membrane along its osmotic gradient. Plays an important role in fluid secretion in salivary glands. Required for TRPV4 activation by hypotonicity. Together with TRPV4, controls regulatory volume decrease in salivary epithelial cells. Seems to play a redundant role in water transport in the eye, lung and in sweat glands. The protein is Aquaporin-5 of Mus musculus (Mouse).